Here is a 197-residue protein sequence, read N- to C-terminus: Putative manganese efflux pump MntP (197 aa).

6 helical membrane passes run 8 to 28 (VILL…GLGA), 43 to 63 (VYAA…GYLL), 66 to 86 (VLLG…LIVL), 123 to 143 (LAIA…LLAL), 146 to 166 (WLAC…GIYL), and 177 to 197 (KAEI…MLFS).

This sequence belongs to the MntP (TC 9.B.29) family.

The protein localises to the cell inner membrane. In terms of biological role, probably functions as a manganese efflux pump. The sequence is that of Putative manganese efflux pump MntP from Psychrobacter arcticus (strain DSM 17307 / VKM B-2377 / 273-4).